The following is a 463-amino-acid chain: Ribosome biogenesis protein NSA1 (463 aa).

The protein belongs to the NSA1 family. In terms of assembly, component of the pre-66S ribosomal particle. Interacts with NOP7, RRP1 and RRP5.

It localises to the nucleus. The protein localises to the nucleolus. Involved in the biogenesis of the 60S ribosomal subunit. The chain is Ribosome biogenesis protein NSA1 (NSA1) from Saccharomyces cerevisiae (strain ATCC 204508 / S288c) (Baker's yeast).